A 1640-amino-acid polypeptide reads, in one-letter code: Basal body protein 10 (1640 aa).

The homodimerization stretch occupies residues 11-64; it reads VLRRKLEALGYSDPLEPASLQLVQKLVEDLVHTTDSYTAVKQQCAKQAQEIAAF. The stretch at 93–148 forms a coiled coil; the sequence is AERHEREAREHYTAVKRLEDTIAELSYWKHAAAEKLASADKENAGLRKRCEELAKL. The segment at 154–185 is disordered; sequence SGAATPQSVAPKISSRSPIRVAPPPSPPRPRQ. A compositionally biased stretch (pro residues) spans 174 to 183; the sequence is VAPPPSPPRP. 10 coiled-coil regions span residues 191-232, 260-332, 370-411, 461-722, 758-960, 1010-1030, 1059-1086, 1129-1282, 1323-1494, and 1523-1557; these read LQAA…RDVE, ILQL…LQDT, VERL…AQSR, FAAL…AEAD, ARQM…AQAA, GEAL…LVRE, RASA…LAAE, INQY…LQAS, AKDQ…AERD, and AELA…TRAT. The segment covering 1592–1618 has biased composition (low complexity); it reads GQGQVQGPAGTAPAAAAGAPGPQPGQA. Residues 1592–1640 form a disordered region; it reads GQGQVQGPAGTAPAAAAGAPGPQPGQAQAGGFGGAHGGGSISLSGGPRR. The span at 1619–1631 shows a compositional bias: gly residues; that stretch reads QAGGFGGAHGGGS.

It belongs to the CEP135/TSGA10 family. As to quaternary structure, homodimer.

The protein localises to the cytoplasm. The protein resides in the cytoskeleton. It is found in the microtubule organizing center. Its subcellular location is the centrosome. It localises to the centriole. Its function is as follows. Microtubule-binding protein essential for cytoskeletal organization (e.g. rootlet microtubule bundles) and flagellar basal body/centriole assembly. The sequence is that of Basal body protein 10 from Chlamydomonas reinhardtii (Chlamydomonas smithii).